The chain runs to 281 residues: Probable splicing factor, arginine/serine-rich 2 (281 aa).

The RRM 1 domain maps to 2 to 72 (VRVYIGRLPN…ERVILEFPRR (71 aa)). 2 stretches are compositionally biased toward basic and acidic residues: residues 78–97 (EERSGSGFRGREPTFRKGGE) and 168–190 (KLQGEDLNGRKLKCTDETRDRSR). Disordered stretches follow at residues 78-100 (EERSGSGFRGREPTFRKGGERQF) and 168-281 (KLQG…SASP). The 75-residue stretch at 112–186 (FRLVIDNLST…RKLKCTDETR (75 aa)) folds into the RRM 2 domain. Residues 191–215 (SRSPRRRSRSRSPTRSRSPPARRRS) are compositionally biased toward basic residues. Over residues 216-225 (PGSDRSDRKS) the composition is skewed to basic and acidic residues. Residues 245–254 (RSRSGGRRSR) are compositionally biased toward basic residues.

This sequence belongs to the splicing factor SR family. Post-translationally, extensively phosphorylated on serine residues in the RS domain.

The protein localises to the nucleus. In terms of biological role, plays a functionally redundant role in spermatogenesis and growth rate control. Required for the development of somatic gonad structures and for progression from larval stage to adulthood. The chain is Probable splicing factor, arginine/serine-rich 2 (rsp-2) from Caenorhabditis elegans.